The chain runs to 236 residues: 7-cyano-7-deazaguanine synthase (236 aa).

7-17 (CSGGLDSVSLA) is a binding site for ATP. Zn(2+)-binding residues include cysteine 185, cysteine 193, cysteine 196, and cysteine 199.

This sequence belongs to the QueC family. It depends on Zn(2+) as a cofactor.

The enzyme catalyses 7-carboxy-7-deazaguanine + NH4(+) + ATP = 7-cyano-7-deazaguanine + ADP + phosphate + H2O + H(+). It functions in the pathway purine metabolism; 7-cyano-7-deazaguanine biosynthesis. Its function is as follows. Catalyzes the ATP-dependent conversion of 7-carboxy-7-deazaguanine (CDG) to 7-cyano-7-deazaguanine (preQ(0)). The sequence is that of 7-cyano-7-deazaguanine synthase from Rhizobium meliloti (strain 1021) (Ensifer meliloti).